Here is a 356-residue protein sequence, read N- to C-terminus: Proline-rich protein 19 (356 aa).

Residues 1–12 (MDTQGPVSQPFQ) are compositionally biased toward polar residues. 4 disordered regions span residues 1–53 (MDTQ…RDPP), 95–143 (LVPG…ELSG), 216–255 (INSP…RGSL), and 312–331 (PSSP…SPPS). Residues 19–29 (RVRRRKTRRER) show a composition bias toward basic residues.

As to quaternary structure, interacts with CNTD1.

It localises to the nucleus. The protein localises to the chromosome. In terms of biological role, promotes meiotic crossing over formation through its interaction with CNTD1 by participating in the crossover differentiation step of crossover-specific recombination intermediates. The chain is Proline-rich protein 19 from Homo sapiens (Human).